A 175-amino-acid polypeptide reads, in one-letter code: Peptide deformylase 1 (175 aa).

C99 and H141 together coordinate Fe cation. E142 is a catalytic residue. H145 lines the Fe cation pocket.

Belongs to the polypeptide deformylase family. Fe(2+) is required as a cofactor.

The catalysed reaction is N-terminal N-formyl-L-methionyl-[peptide] + H2O = N-terminal L-methionyl-[peptide] + formate. In terms of biological role, removes the formyl group from the N-terminal Met of newly synthesized proteins. Requires at least a dipeptide for an efficient rate of reaction. N-terminal L-methionine is a prerequisite for activity but the enzyme has broad specificity at other positions. In Rickettsia conorii (strain ATCC VR-613 / Malish 7), this protein is Peptide deformylase 1.